The sequence spans 333 residues: Galactinol synthase 5 (333 aa).

Residue Lys103 is part of the active site. Positions 119, 121, and 257 each coordinate Mn(2+).

This sequence belongs to the glycosyltransferase 8 family. Galactosyltransferase subfamily. The cofactor is a divalent metal cation.

It localises to the cytoplasm. The catalysed reaction is myo-inositol + UDP-alpha-D-galactose = alpha-D-galactosyl-(1-&gt;3)-1D-myo-inositol + UDP + H(+). Its function is as follows. Galactinol synthase involved in the biosynthesis of raffinose family oligosaccharides (RFOs) that function as osmoprotectants. May promote plant stress tolerance. This is Galactinol synthase 5 (GOLS5) from Arabidopsis thaliana (Mouse-ear cress).